The sequence spans 676 residues: DNA ligase (676 aa).

Residues 39–43 (DYVYD), 88–91 (SLND), and Glu-118 each bind NAD(+). Lys-120 functions as the N6-AMP-lysine intermediate in the catalytic mechanism. NAD(+) contacts are provided by Arg-141, Glu-175, Lys-291, and Lys-315. Zn(2+) contacts are provided by Cys-409, Cys-412, Cys-427, and Cys-432. In terms of domain architecture, BRCT spans 595-676 (EVESPFKDKT…MVDALDASHF (82 aa)).

The protein belongs to the NAD-dependent DNA ligase family. LigA subfamily. Mg(2+) serves as cofactor. The cofactor is Mn(2+).

It carries out the reaction NAD(+) + (deoxyribonucleotide)n-3'-hydroxyl + 5'-phospho-(deoxyribonucleotide)m = (deoxyribonucleotide)n+m + AMP + beta-nicotinamide D-nucleotide.. Functionally, DNA ligase that catalyzes the formation of phosphodiester linkages between 5'-phosphoryl and 3'-hydroxyl groups in double-stranded DNA using NAD as a coenzyme and as the energy source for the reaction. It is essential for DNA replication and repair of damaged DNA. The protein is DNA ligase of Enterococcus faecalis (strain ATCC 700802 / V583).